Here is a 78-residue protein sequence, read N- to C-terminus: Translational regulator CsrA (78 aa).

This sequence belongs to the CsrA/RsmA family. Homodimer; the beta-strands of each monomer intercalate to form a hydrophobic core, while the alpha-helices form wings that extend away from the core.

The protein localises to the cytoplasm. Functionally, a translational regulator that binds mRNA to regulate translation initiation and/or mRNA stability. Usually binds in the 5'-UTR at or near the Shine-Dalgarno sequence preventing ribosome-binding, thus repressing translation. Its main target seems to be the major flagellin gene, while its function is anatagonized by FliW. The protein is Translational regulator CsrA of Borrelia hermsii (strain HS1 / DAH).